Here is a 167-residue protein sequence, read N- to C-terminus: NADH-ubiquinone oxidoreductase chain 6 (167 aa).

A run of 5 helical transmembrane segments spans residues 1–21, 27–47, 50–70, 88–108, and 143–163; these read MKMM…VAFA, VYGG…VVSL, VFLG…VFGY, VALS…LMSG, and WALV…LEVV.

It belongs to the complex I subunit 6 family. Core subunit of respiratory chain NADH dehydrogenase (Complex I) which is composed of 45 different subunits.

It is found in the mitochondrion inner membrane. It carries out the reaction a ubiquinone + NADH + 5 H(+)(in) = a ubiquinol + NAD(+) + 4 H(+)(out). Functionally, core subunit of the mitochondrial membrane respiratory chain NADH dehydrogenase (Complex I) which catalyzes electron transfer from NADH through the respiratory chain, using ubiquinone as an electron acceptor. Essential for the catalytic activity and assembly of complex I. The chain is NADH-ubiquinone oxidoreductase chain 6 (MT-ND6) from Osphranter robustus (Wallaroo).